A 335-amino-acid chain; its full sequence is Fimbrial adhesin PapGI (335 aa).

An N-terminal signal peptide occupies residues 1-21 (MKKWFPAFLFLSLSGGNDALA).

Belongs to the adhesin PapG family. Interacts with chaperone PapD. Assembly of the P pilus requires periplasmic chaperone PapD, in absence of the chaperone overexpression of this subunit is toxic, where the protein accumulates in the periplasm. PapD stimulates release of PapG from an inner membrane-associated form (where at least 1 disulfide bond can form) into the periplasm and also helps it achieve its correct digalactoside-binding conformation. In terms of processing, contains disulfide bonds.

Its subcellular location is the secreted. The protein resides in the fimbrium. Its function is as follows. Tip adhesin component of type P pili that binds preferentially to host cell glycosphingolipids such as globotriaosylceramide. This Escherichia coli protein is Fimbrial adhesin PapGI.